Reading from the N-terminus, the 331-residue chain is Adenosine deaminase (331 aa).

Residues His-12 and His-14 each contribute to the Zn(2+) site. His-14, Asp-16, and Gly-170 together coordinate substrate. His-197 contributes to the Zn(2+) binding site. The Proton donor role is filled by Glu-200. Residue Asp-278 participates in Zn(2+) binding.

This sequence belongs to the metallo-dependent hydrolases superfamily. Adenosine and AMP deaminases family. Adenosine deaminase subfamily. Zn(2+) serves as cofactor.

It carries out the reaction adenosine + H2O + H(+) = inosine + NH4(+). It catalyses the reaction 2'-deoxyadenosine + H2O + H(+) = 2'-deoxyinosine + NH4(+). Functionally, catalyzes the hydrolytic deamination of adenosine and 2-deoxyadenosine. The polypeptide is Adenosine deaminase (Vibrio vulnificus (strain CMCP6)).